Here is a 449-residue protein sequence, read N- to C-terminus: Hyaluronidase (449 aa).

Residues 1–23 (MYHLWIKCLAAWIFLKRFNGVHV) form the signal peptide. Disulfide bonds link Cys-47–Cys-340 and Cys-211–Cys-227. Asn-67, Asn-103, and Asn-111 each carry an N-linked (GlcNAc...) asparagine glycan. Glu-135 (proton donor) is an active-site residue. Asn-153 is a glycosylation site (N-linked (GlcNAc...) asparagine). An N-linked (GlcNAc...) asparagine glycan is attached at Asn-357. Cystine bridges form between Cys-365-Cys-376, Cys-370-Cys-427, and Cys-429-Cys-438. A glycan (N-linked (GlcNAc...) asparagine) is linked at Asn-401. The 12-residue stretch at 427–438 (CQCYQGWKGLYC) folds into the EGF-like domain.

The protein belongs to the glycosyl hydrolase 56 family. Monomer. Expressed by the venom gland.

Its subcellular location is the secreted. It carries out the reaction Random hydrolysis of (1-&gt;4)-linkages between N-acetyl-beta-D-glucosamine and D-glucuronate residues in hyaluronate.. Its function is as follows. Snake venom endo-hyaluronidase that degrades hyaluronan to smaller oligosaccharide fragments. In venom, it is not toxic by itself, but increases the diffusion of other venom proteins by degrading the extracellular matrix. In addition, it displays antiedematogenic activity. The sequence is that of Hyaluronidase from Crotalus adamanteus (Eastern diamondback rattlesnake).